The primary structure comprises 221 residues: MEAHMPAVAEMLKASEAAVVSRVSLRDVNRVIDEHILPEAFVSLDNGRHVLAGACSLIAFYFESARRLTSEERLFAIRIAEGRLARARTLPWSALLREDWTVHHEFLTIDLMPFMRGASERLDDLAAAREIVTSSPDILGGTPVVRGTRVPVYDVAASVAAGHSVERMLEAWPSLDAEKIRLASIYAEANPLRGRRRVFGDLPEGSVIVSDRRVARRRKTG.

This is an uncharacterized protein from Sinorhizobium fredii (strain NBRC 101917 / NGR234).